The primary structure comprises 244 residues: Small ribosomal subunit protein uS2 (244 aa).

The protein belongs to the universal ribosomal protein uS2 family.

In Desulforudis audaxviator (strain MP104C), this protein is Small ribosomal subunit protein uS2.